Reading from the N-terminus, the 89-residue chain is MSLSAEQKAEIVAKYGRSENDTGSSEVQAALYTAQIDHLQGHFKEHIHDHHSRRGLLRMVSQRRKLLDYLKRKDVAAYTALIAELGLRR.

The protein belongs to the universal ribosomal protein uS15 family. In terms of assembly, part of the 30S ribosomal subunit. Forms a bridge to the 50S subunit in the 70S ribosome, contacting the 23S rRNA.

One of the primary rRNA binding proteins, it binds directly to 16S rRNA where it helps nucleate assembly of the platform of the 30S subunit by binding and bridging several RNA helices of the 16S rRNA. In terms of biological role, forms an intersubunit bridge (bridge B4) with the 23S rRNA of the 50S subunit in the ribosome. This is Small ribosomal subunit protein uS15 from Psychromonas ingrahamii (strain DSM 17664 / CCUG 51855 / 37).